Consider the following 122-residue polypeptide: Ribosome-binding factor A (122 aa).

Belongs to the RbfA family. Monomer. Binds 30S ribosomal subunits, but not 50S ribosomal subunits or 70S ribosomes.

It is found in the cytoplasm. Its function is as follows. One of several proteins that assist in the late maturation steps of the functional core of the 30S ribosomal subunit. Associates with free 30S ribosomal subunits (but not with 30S subunits that are part of 70S ribosomes or polysomes). Required for efficient processing of 16S rRNA. May interact with the 5'-terminal helix region of 16S rRNA. This Geotalea uraniireducens (strain Rf4) (Geobacter uraniireducens) protein is Ribosome-binding factor A.